The chain runs to 1057 residues: Probable sucrose-phosphate synthase 1 (1057 aa).

Positions 103–115 are enriched in basic and acidic residues; the sequence is RRLERERGRREAT. Disordered stretches follow at residues 103–143, 439–459, and 670–693; these read RRLE…STRS, PQDGDMDGETEGNEDNPASPD, and RHPQWQRTDDGGETSESDSPGDSL. Residues 442–452 are compositionally biased toward acidic residues; it reads GDMDGETEGNE.

The protein belongs to the glycosyltransferase 1 family. Homodimer or homotetramer.

The enzyme catalyses beta-D-fructose 6-phosphate + UDP-alpha-D-glucose = sucrose 6(F)-phosphate + UDP + H(+). It functions in the pathway glycan biosynthesis; sucrose biosynthesis; sucrose from D-fructose 6-phosphate and UDP-alpha-D-glucose: step 1/2. Its activity is regulated as follows. Activity is regulated by phosphorylation and moderated by concentration of metabolites and light. Its function is as follows. Plays a role in photosynthetic sucrose synthesis by catalyzing the rate-limiting step of sucrose biosynthesis from UDP-glucose and fructose- 6-phosphate. Involved in the regulation of carbon partitioning in the leaves of plants. May regulate the synthesis of sucrose and therefore play a major role as a limiting factor in the export of photoassimilates out of the leaf. Plays a role for sucrose availability that is essential for plant growth and fiber elongation. This Citrus unshiu (Satsuma mandarin) protein is Probable sucrose-phosphate synthase 1 (SPS1).